Reading from the N-terminus, the 398-residue chain is uncharacterized protein (398 aa).

An N6-(pyridoxal phosphate)lysine modification is found at lysine 212.

Belongs to the trans-sulfuration enzymes family. It depends on pyridoxal 5'-phosphate as a cofactor.

This is an uncharacterized protein from Schizosaccharomyces pombe (strain 972 / ATCC 24843) (Fission yeast).